A 560-amino-acid polypeptide reads, in one-letter code: DNA ligase B (560 aa).

The active-site N6-AMP-lysine intermediate is Lys124.

The protein belongs to the NAD-dependent DNA ligase family. LigB subfamily.

The enzyme catalyses NAD(+) + (deoxyribonucleotide)n-3'-hydroxyl + 5'-phospho-(deoxyribonucleotide)m = (deoxyribonucleotide)n+m + AMP + beta-nicotinamide D-nucleotide.. Its function is as follows. Catalyzes the formation of phosphodiester linkages between 5'-phosphoryl and 3'-hydroxyl groups in double-stranded DNA using NAD as a coenzyme and as the energy source for the reaction. The polypeptide is DNA ligase B (Escherichia coli O6:H1 (strain CFT073 / ATCC 700928 / UPEC)).